The chain runs to 2472 residues: Telomere-associated protein RIF1 (2472 aa).

The tract at residues 1 to 25 (MTARGQSPLAPLLETLEDPSASHGG) is disordered. A Phosphoserine modification is found at Ser402. Thr409 is subject to Phosphothreonine. Residues Ser782, Ser979, and Ser1008 each carry the phosphoserine modification. Thr1047 carries the phosphothreonine modification. The segment at 1145 to 1192 (LEKSSLSNNECGSLDKTSPEMSNSNNDERKKALISSRKTSTECASSTE) is disordered. The segment covering 1148–1169 (SSLSNNECGSLDKTSPEMSNSN) has biased composition (polar residues). Residue Ser1162 is modified to Phosphoserine. The residue at position 1220 (Thr1220) is a Phosphothreonine. A phosphoserine mark is found at Ser1236 and Ser1238. Basic and acidic residues-rich tracts occupy residues 1265 to 1279 (AKQREGTFSKSDSEK) and 1306 to 1315 (MRSEPEKNTE). 3 disordered regions span residues 1265-1318 (AKQR…EESV), 1398-1464 (MVNE…DVLP), and 1479-1587 (IEKG…DQEE). The span at 1400–1412 (NEDSQVQITPNQK) shows a compositional bias: polar residues. Phosphoserine occurs at positions 1422, 1454, and 1513. Composition is skewed to basic and acidic residues over residues 1431–1464 (SQDKENSHQKKERRKEEEKPLQKSPLHIKDDVLP) and 1500–1530 (EQNKKKADPENIKSEGDGTQDIVDKSSEKLV). At Thr1518 the chain carries Phosphothreonine. Residues Ser1542, Ser1552, Ser1554, Ser1556, and Ser1564 each carry the phosphoserine modification. Residues 1565–1574 (RKKRSGKWKN) show a composition bias toward basic residues. 8 positions are modified to phosphoserine: Ser1576, Ser1579, Ser1613, Ser1616, Ser1688, Ser1693, Ser1706, and Ser1709. A disordered region spans residues 1762 to 1782 (TKKADVQAPVSPSETSQANPY). Positions 1771-1782 (VSPSETSQANPY) are enriched in polar residues. Thr1806 bears the Phosphothreonine mark. At Ser1810 the chain carries Phosphoserine. Positions 1846-1859 (AMSLESQESPNENF) are enriched in polar residues. The segment at 1846 to 1889 (AMSLESQESPNENFKTVGPCLGDSKNVSQESLETKEEKPEETPK) is disordered. Phosphoserine occurs at positions 1873 and 1876. Residues 1877 to 1889 (LETKEEKPEETPK) are compositionally biased toward basic and acidic residues. The segment at 1924–2472 (EASFHGQERT…WRSPSHENSI (549 aa)) is interaction with condensed chromosomes in telophase. A phosphoserine mark is found at Ser1926 and Ser1971. The segment at 1992–2021 (EQTAAGELDGGNDVSDLHSSEETNTKMKNN) is disordered. The segment covering 2006 to 2021 (SDLHSSEETNTKMKNN) has biased composition (basic and acidic residues). Phosphoserine is present on residues Ser2144 and Ser2161. Thr2167 carries the post-translational modification Phosphothreonine. The interval 2170–2446 (VWSPLASPST…SGSQLFEMHE (277 aa)) is interaction with ERCC6. 5 positions are modified to phosphoserine: Ser2172, Ser2176, Ser2195, Ser2196, and Ser2205. Polar residues predominate over residues 2227 to 2255 (RSHSSNSSPIGKSVKTSPTTQSKHNTTSA). Positions 2227–2269 (RSHSSNSSPIGKSVKTSPTTQSKHNTTSAKGFLSPGSRSPKFK) are disordered. Phosphoserine is present on residues Ser2260, Ser2339, Ser2391, Ser2393, Ser2465, and Ser2471.

The protein belongs to the RIF1 family. In terms of assembly, interacts with TP53BP1 (when phosphorylated by ATM). May interact with TRF2. Interacts with SHLD2. Interacts with ERCC6 (via WHD region). Interacts with ASTE1. As to expression, highly expressed in testis.

Its subcellular location is the nucleus. It is found in the chromosome. The protein resides in the telomere. The protein localises to the cytoplasm. It localises to the cytoskeleton. Its subcellular location is the spindle. Key regulator of TP53BP1 that plays a key role in the repair of double-strand DNA breaks (DSBs) in response to DNA damage: acts by promoting non-homologous end joining (NHEJ)-mediated repair of DSBs. In response to DNA damage, interacts with ATM-phosphorylated TP53BP1. Interaction with TP53BP1 leads to dissociate the interaction between NUDT16L1/TIRR and TP53BP1, thereby unmasking the tandem Tudor-like domain of TP53BP1 and allowing recruitment to DNA DSBs. Once recruited to DSBs, RIF1 and TP53BP1 act by promoting NHEJ-mediated repair of DSBs. In the same time, RIF1 and TP53BP1 specifically counteract the function of BRCA1 by blocking DSBs resection via homologous recombination (HR) during G1 phase. Also required for immunoglobulin class-switch recombination (CSR) during antibody genesis, a process that involves the generation of DNA DSBs. Promotes NHEJ of dysfunctional telomeres. The polypeptide is Telomere-associated protein RIF1 (Homo sapiens (Human)).